Here is a 179-residue protein sequence, read N- to C-terminus: Large ribosomal subunit protein uL6 (179 aa).

It belongs to the universal ribosomal protein uL6 family. As to quaternary structure, part of the 50S ribosomal subunit.

This protein binds to the 23S rRNA, and is important in its secondary structure. It is located near the subunit interface in the base of the L7/L12 stalk, and near the tRNA binding site of the peptidyltransferase center. The chain is Large ribosomal subunit protein uL6 from Synechococcus elongatus (strain ATCC 33912 / PCC 7942 / FACHB-805) (Anacystis nidulans R2).